We begin with the raw amino-acid sequence, 143 residues long: Small ribosomal subunit protein uS9 (143 aa).

The segment at 123 to 143 (RPEPKKFGGRGARSRFQKSYR) is disordered. A compositionally biased stretch (basic residues) spans 134–143 (ARSRFQKSYR).

This sequence belongs to the universal ribosomal protein uS9 family.

This chain is Small ribosomal subunit protein uS9 (RPS16), found in Kluyveromyces lactis (strain ATCC 8585 / CBS 2359 / DSM 70799 / NBRC 1267 / NRRL Y-1140 / WM37) (Yeast).